Consider the following 510-residue polypeptide: Indoleacetate--CoA ligase (510 aa).

The protein belongs to the ATP-dependent AMP-binding enzyme family. As to quaternary structure, monomer.

The enzyme catalyses (indol-3-yl)acetate + ATP + CoA = (indol-3-yl)acetyl-CoA + AMP + diphosphate. The catalysed reaction is (indol-3-yl)acetate + ATP + H(+) = (indol-3-yl)acetyl-AMP + diphosphate. It catalyses the reaction (indol-3-yl)acetyl-AMP + CoA = (indol-3-yl)acetyl-CoA + AMP + H(+). Inhibited by high concentrations of substrates, and by the synthetic auxin compound 2,4-dichlorophenoxyacetate (2,4-D), which does not serve as substrate. In terms of biological role, involved in degradation of indoleacetate, the most common member of the auxin class of plant hormones. Highly specific indoleacetate-CoA ligase which catalyzes the ATP-dependent activation of indoleacetate (IAA) to indoleacetyl-CoA. Also activates some closely related compounds such as the non-physiological compound (2-naphthyl)acetate and phenylacetate, which seems to be a fortuitous substrate for IaaB. In Aromatoleum aromaticum (strain DSM 19018 / LMG 30748 / EbN1) (Azoarcus sp. (strain EbN1)), this protein is Indoleacetate--CoA ligase.